Consider the following 1472-residue polypeptide: Adhesion G protein-coupled receptor L1 (1472 aa).

The first 24 residues, 1–24 (MARLAAVLWSLCVTAILVTSATQG), serve as a signal peptide directing secretion. Residues 25–857 (LSRAGLPFGL…EIYQGRINEL (833 aa)) are Extracellular-facing. The SUEL-type lectin domain occupies 40 to 129 (ACEGYPIELR…KYLEVQYDCV (90 aa)). Disulfide bonds link cysteine 41/cysteine 71, cysteine 50/cysteine 128, cysteine 83/cysteine 115, cysteine 96/cysteine 102, and cysteine 140/cysteine 322. Glutamate 42 lines the alpha-L-rhamnose pocket. A glycan (N-linked (GlcNAc...) asparagine) is linked at asparagine 98. 117–120 (GTYK) lines the alpha-L-rhamnose pocket. Residues 139-398 (VCPGTLQKVL…VVRYSLEFGP (260 aa)) enclose the Olfactomedin-like domain. Residues 400–468 (DPSAGPATSP…APAPSTRRPP (69 aa)) form a disordered region. Residues 405-441 (PATSPPLSTTTTARPTPLTSTASPAATTPLRRAPLTT) are compositionally biased toward low complexity. Positions 453 to 468 (DLPPATAPAPSTRRPP) are enriched in pro residues. Cystine bridges form between cysteine 480/cysteine 515 and cysteine 503/cysteine 532. N-linked (GlcNAc...) asparagine glycans are attached at residues asparagine 531, asparagine 640, asparagine 741, asparagine 800, asparagine 805, and asparagine 826. Residues 669–850 (PARFLAAKQN…AVLMAHREIY (182 aa)) enclose the GAIN-B domain. 2 disulfide bridges follow: cysteine 801–cysteine 832 and cysteine 820–cysteine 834. Residues 801 to 850 (CSFWNYSERSMLGYWSTQGCRLVESNKTHTTCACSHLTNFAVLMAHREIY) are GPS. The helical transmembrane segment at 858–878 (LLSVITWVGIVISLVCLAICI) threads the bilayer. Residues 879-892 (STFCFLRGLQTDRN) are Cytoplasmic-facing. A helical transmembrane segment spans residues 893–913 (TIHKNLCINLFLAELLFLVGI). The Extracellular portion of the chain corresponds to 914–919 (DKTQYE). The helical transmembrane segment at 920 to 940 (IACPIFAGLLHYFFLAAFSWL) threads the bilayer. Residues 941–963 (CLEGVHLYLLLVEVFESEYSRTK) lie on the Cytoplasmic side of the membrane. A helical transmembrane segment spans residues 964–984 (YYYLGGYCFPALVVGIAAAID). At 985-1001 (YRSYGTEKACWLRVDNY) the chain is on the extracellular side. Residues 1002-1022 (FIWSFIGPVSFVIVVNLVFLM) form a helical membrane-spanning segment. The Cytoplasmic segment spans residues 1023–1049 (VTLHKMVRSSSVLKPDSSRLDNIKSWA). The helical transmembrane segment at 1050 to 1070 (LGAIALLFLLGLTWAFGLLFI) threads the bilayer. Residues 1071–1074 (NKES) are Extracellular-facing. Residues 1075 to 1095 (VVMAYLFTTFNAFQGVFIFVF) form a helical membrane-spanning segment. Residues 1096–1472 (HCALQKKVHK…DGQMQLVTSL (377 aa)) are Cytoplasmic-facing. Arginine 1193 carries the post-translational modification Omega-N-methylarginine. A Phosphoserine modification is found at serine 1219. Disordered regions lie at residues 1247 to 1271 (FNNS…PRGR), 1291 to 1325 (NLRG…GGPG), 1358 to 1427 (ESES…SRPP), and 1449 to 1472 (YLAA…VTSL). Pro residues-rich tracts occupy residues 1301 to 1313 (GPPP…PPVP) and 1406 to 1418 (ALPP…PGPP). Serine 1471 carries the post-translational modification Phosphoserine.

Belongs to the G-protein coupled receptor 2 family. Adhesion G-protein coupled receptor (ADGR) subfamily. As to quaternary structure, forms a heterodimer, consisting of a large extracellular region (p120) non-covalently linked to a seven-transmembrane moiety (p85). Interacts with syntaxin and with proteins of the SHANK family via the PDZ domain. Interacts (via extracellular domain) with FLRT1, FLRT2 and FLRT3 (via extracellular domain). Post-translationally, autoproteolytically cleaved into 2 subunits, an extracellular subunit and a seven-transmembrane subunit. This proteolytic processing takes place early in the biosynthetic pathway, either in the endoplasmic reticulum or in the early compartment of the Golgi apparatus. As to expression, brain-specific expression but low levels are also detected in kidney, lung and spleen.

The protein resides in the cell membrane. It is found in the cell projection. Its subcellular location is the axon. The protein localises to the growth cone. It localises to the synapse. The protein resides in the presynaptic cell membrane. It is found in the synaptosome. Its function is as follows. Calcium-independent receptor of high affinity for alpha-latrotoxin, an excitatory neurotoxin present in black widow spider venom which triggers massive exocytosis from neurons and neuroendocrine cells. Receptor for TENM2 that mediates heterophilic synaptic cell-cell contact and postsynaptic specialization. Receptor probably implicated in the regulation of exocytosis. This chain is Adhesion G protein-coupled receptor L1, found in Bos taurus (Bovine).